The primary structure comprises 174 residues: ATP synthase subunit b (174 aa).

A helical membrane pass occupies residues 18–38 (IIVVSGSFLILMFLLKHFAWG).

Belongs to the ATPase B chain family. As to quaternary structure, F-type ATPases have 2 components, F(1) - the catalytic core - and F(0) - the membrane proton channel. F(1) has five subunits: alpha(3), beta(3), gamma(1), delta(1), epsilon(1). F(0) has three main subunits: a(1), b(2) and c(10-14). The alpha and beta chains form an alternating ring which encloses part of the gamma chain. F(1) is attached to F(0) by a central stalk formed by the gamma and epsilon chains, while a peripheral stalk is formed by the delta and b chains.

It is found in the cell membrane. Its function is as follows. F(1)F(0) ATP synthase produces ATP from ADP in the presence of a proton or sodium gradient. F-type ATPases consist of two structural domains, F(1) containing the extramembraneous catalytic core and F(0) containing the membrane proton channel, linked together by a central stalk and a peripheral stalk. During catalysis, ATP synthesis in the catalytic domain of F(1) is coupled via a rotary mechanism of the central stalk subunits to proton translocation. Functionally, component of the F(0) channel, it forms part of the peripheral stalk, linking F(1) to F(0). The sequence is that of ATP synthase subunit b from Enterococcus hirae (strain ATCC 9790 / DSM 20160 / JCM 8729 / LMG 6399 / NBRC 3181 / NCIMB 6459 / NCDO 1258 / NCTC 12367 / WDCM 00089 / R).